A 60-amino-acid chain; its full sequence is Large ribosomal subunit protein uL30 (60 aa).

Belongs to the universal ribosomal protein uL30 family. As to quaternary structure, part of the 50S ribosomal subunit.

The chain is Large ribosomal subunit protein uL30 from Dehalococcoides mccartyi (strain ATCC BAA-2266 / KCTC 15142 / 195) (Dehalococcoides ethenogenes (strain 195)).